An 877-amino-acid polypeptide reads, in one-letter code: DNA polymerase I (877 aa).

The region spanning 177-270 is the 5'-3' exonuclease domain; it reads TPAQFIDLKA…LEDLVYSGPD (94 aa). In terms of domain architecture, 3'-5' exonuclease spans 302–465; the sequence is DFTIVDQISQ…TEPILLEKLS (164 aa).

This sequence belongs to the DNA polymerase type-A family. In terms of assembly, single-chain monomer with multiple functions.

It catalyses the reaction DNA(n) + a 2'-deoxyribonucleoside 5'-triphosphate = DNA(n+1) + diphosphate. Its function is as follows. In addition to polymerase activity, this DNA polymerase exhibits 3'-5' and 5'-3' exonuclease activity. This chain is DNA polymerase I (polA), found in Streptococcus pneumoniae serotype 4 (strain ATCC BAA-334 / TIGR4).